We begin with the raw amino-acid sequence, 157 residues long: Protein Smg (157 aa).

Belongs to the Smg family.

The polypeptide is Protein Smg (Escherichia coli O6:H1 (strain CFT073 / ATCC 700928 / UPEC)).